Consider the following 364-residue polypeptide: Spermidine/putrescine import ATP-binding protein PotA (364 aa).

Residues 5-235 (LSFKDVSKGF…PVNRFVADFI (231 aa)) enclose the ABC transporter domain. Position 37–44 (37–44 (GPSGCGKT)) interacts with ATP.

It belongs to the ABC transporter superfamily. Spermidine/putrescine importer (TC 3.A.1.11.1) family. As to quaternary structure, the complex is composed of two ATP-binding proteins (PotA), two transmembrane proteins (PotB and PotC) and a solute-binding protein (PotD).

The protein resides in the cell membrane. The catalysed reaction is ATP + H2O + polyamine-[polyamine-binding protein]Side 1 = ADP + phosphate + polyamineSide 2 + [polyamine-binding protein]Side 1.. In terms of biological role, part of the ABC transporter complex PotABCD involved in spermidine/putrescine import. Responsible for energy coupling to the transport system. The sequence is that of Spermidine/putrescine import ATP-binding protein PotA from Staphylococcus epidermidis (strain ATCC 12228 / FDA PCI 1200).